The chain runs to 294 residues: Putative glucose-6-phosphate 1-epimerase (294 aa).

Substrate is bound by residues R74 and R99. Residue H164 is part of the active site. D208 is a binding site for substrate. E267 is an active-site residue.

The protein belongs to the glucose-6-phosphate 1-epimerase family. Monomer in solution.

It catalyses the reaction alpha-D-glucose 6-phosphate = beta-D-glucose 6-phosphate. This Escherichia coli (strain K12) protein is Putative glucose-6-phosphate 1-epimerase (yeaD).